The chain runs to 523 residues: Cytokinin dehydrogenase 3 (523 aa).

The signal sequence occupies residues 1 to 31 (MASYNLRSQVRLIAITIVIIITLSTPITTNT). Positions 66-243 (TKIFPSAVLI…TRARIKLEVA (178 aa)) constitute an FAD-binding PCMH-type domain. Positions 100, 102, and 104 each coordinate FAD. A Pros-8alpha-FAD histidine modification is found at His105. Residues Ser106 and Gln110 each contribute to the FAD site. Residue Asn153 is glycosylated (N-linked (GlcNAc...) asparagine). FAD-binding residues include Asp167, Thr172, Ser178, Ile182, and Ile233. Asn408 is a glycosylation site (N-linked (GlcNAc...) asparagine). Tyr476, Ser511, and Gln514 together coordinate FAD.

This sequence belongs to the oxygen-dependent FAD-linked oxidoreductase family. Requires FAD as cofactor. As to expression, very weak expression in the young shoot tissues around two weeks after germination. Present in the center of the floral meristem and the boundary between long stamen primordia and gynoecial primordia.

The protein resides in the endoplasmic reticulum. Its subcellular location is the vacuole. It catalyses the reaction N(6)-dimethylallyladenine + A + H2O = 3-methyl-2-butenal + adenine + AH2. Catalyzes the oxidation of cytokinins, a family of N(6)-substituted adenine derivatives that are plant hormones, where the substituent is an isopentenyl group. Catalyzes in vitro the oxidation of various types of cytokinin nucleotides that are known as direct products of cytokinin biosynthesis. In association with CKX5 regulates the activity of the reproductive meristems, flower organ size and ovule formation. This is Cytokinin dehydrogenase 3 (CKX3) from Arabidopsis thaliana (Mouse-ear cress).